We begin with the raw amino-acid sequence, 120 residues long: Glycine cleavage system H protein (120 aa).

In terms of domain architecture, Lipoyl-binding spans 17–99 (VATVGITAHA…QGDGWLYRLK (83 aa)). The residue at position 58 (Lys58) is an N6-lipoyllysine.

Belongs to the GcvH family. As to quaternary structure, the glycine cleavage system is composed of four proteins: P, T, L and H. The cofactor is (R)-lipoate.

Functionally, the glycine cleavage system catalyzes the degradation of glycine. The H protein shuttles the methylamine group of glycine from the P protein to the T protein. This chain is Glycine cleavage system H protein, found in Methylorubrum extorquens (strain PA1) (Methylobacterium extorquens).